The sequence spans 110 residues: Secreted Ly-6/uPAR-related protein 1 (110 aa).

The signal sequence occupies residues 1–22 (MTLRWAMWLLLLAAWSMGYGEA). The UPAR/Ly6 domain occupies 24–73 (RCYTCEQPTAINSCKNIAQCKMEDTACKTVLETVEAAFPFNHSPMVTRSC). 5 disulfides stabilise this stretch: cysteine 25–cysteine 50, cysteine 28–cysteine 37, cysteine 43–cysteine 73, cysteine 77–cysteine 93, and cysteine 94–cysteine 99.

Homodimer. Interacts with PLAU. Interacts with CHRNA7. In terms of tissue distribution, expressed in skin, eye, whole lung, trachea, esophagus and stomach. Widely expressed in various tissues including spleen and thymus but not pancreas. Expressed in macrophages, dendritic cells, T and B cells. Expressed in lung specifically in ciliated bronchial epithelial cells (at protein level). Expression is decreased in lungs of asthmatic model mice. Expressed in the cornea.

The protein resides in the secreted. In terms of biological role, has an antitumor activity. Was found to be a marker of late differentiation of the skin. Implicated in maintaining the physiological and structural integrity of the keratinocyte layers of the skin. In vitro down-regulates keratinocyte proliferation; the function may involve the proposed role as modulator of nicotinic acetylcholine receptors (nAChRs) activity. In vitro inhibits alpha-7-dependent nAChR currents in an allosteric manner. In T cells may be involved in regulation of intracellular Ca(2+) signaling. Seems to have a immunomodulatory function in the cornea. The function may implicate a possible role as a scavenger receptor for PLAU thereby blocking PLAU-dependent functions of PLAUR such as in cell migration and proliferation. This chain is Secreted Ly-6/uPAR-related protein 1 (Slurp1), found in Mus musculus (Mouse).